Reading from the N-terminus, the 228-residue chain is Cytidylate kinase (228 aa).

10–18 (GPSGSGKGT) is a binding site for ATP.

This sequence belongs to the cytidylate kinase family. Type 1 subfamily.

It localises to the cytoplasm. The catalysed reaction is CMP + ATP = CDP + ADP. It catalyses the reaction dCMP + ATP = dCDP + ADP. The sequence is that of Cytidylate kinase from Acinetobacter baumannii (strain ACICU).